Here is a 518-residue protein sequence, read N- to C-terminus: Efflux pump terJ (518 aa).

The chain crosses the membrane as a helical span at residues isoleucine 43 to valine 63. Asparagine 79 is a glycosylation site (N-linked (GlcNAc...) asparagine). 12 consecutive transmembrane segments (helical) span residues glutamine 82–glycine 102, leucine 112–glutamate 132, glycine 135–proline 155, alanine 177–alanine 197, tryptophan 204–valine 224, isoleucine 244–alanine 264, proline 272–glutamate 292, phenylalanine 311–tryptophan 331, glycine 339–alanine 359, glycine 364–cysteine 384, tryptophan 400–alanine 420, and serine 439–valine 459. N-linked (GlcNAc...) asparagine glycosylation occurs at asparagine 466. Residues alanine 477–leucine 497 form a helical membrane-spanning segment.

Belongs to the major facilitator superfamily.

The protein resides in the cell membrane. Efflux pump that might be required for efficient secretion of terrein or other secondary metabolies produced by the terrein genne cluster. The chain is Efflux pump terJ from Aspergillus terreus (strain NIH 2624 / FGSC A1156).